The primary structure comprises 71 residues: Large ribosomal subunit protein bL31 (71 aa).

4 residues coordinate Zn(2+): Cys16, Cys18, Cys36, and Cys39.

Belongs to the bacterial ribosomal protein bL31 family. Type A subfamily. Part of the 50S ribosomal subunit. Requires Zn(2+) as cofactor.

Binds the 23S rRNA. In Pseudothermotoga lettingae (strain ATCC BAA-301 / DSM 14385 / NBRC 107922 / TMO) (Thermotoga lettingae), this protein is Large ribosomal subunit protein bL31.